The primary structure comprises 307 residues: UPF0276 protein HI_1600 (307 aa).

The protein belongs to the UPF0276 family.

This is UPF0276 protein HI_1600 from Haemophilus influenzae (strain ATCC 51907 / DSM 11121 / KW20 / Rd).